We begin with the raw amino-acid sequence, 360 residues long: Chorismate synthase (360 aa).

The NADP(+) site is built by arginine 48 and arginine 54. FMN-binding positions include 125–127 (RSS), 242–243 (NG), glycine 283, 298–302 (KPTSS), and arginine 324.

Belongs to the chorismate synthase family. In terms of assembly, homotetramer. FMNH2 serves as cofactor.

It catalyses the reaction 5-O-(1-carboxyvinyl)-3-phosphoshikimate = chorismate + phosphate. It functions in the pathway metabolic intermediate biosynthesis; chorismate biosynthesis; chorismate from D-erythrose 4-phosphate and phosphoenolpyruvate: step 7/7. Functionally, catalyzes the anti-1,4-elimination of the C-3 phosphate and the C-6 proR hydrogen from 5-enolpyruvylshikimate-3-phosphate (EPSP) to yield chorismate, which is the branch point compound that serves as the starting substrate for the three terminal pathways of aromatic amino acid biosynthesis. This reaction introduces a second double bond into the aromatic ring system. This is Chorismate synthase from Gluconobacter oxydans (strain 621H) (Gluconobacter suboxydans).